A 128-amino-acid chain; its full sequence is Large-conductance mechanosensitive channel (128 aa).

2 consecutive transmembrane segments (helical) span residues 11–31 and 70–90; these read FALK…AAFG and GAFI…FIFV.

It belongs to the MscL family. In terms of assembly, homopentamer.

The protein resides in the cell membrane. Functionally, channel that opens in response to stretch forces in the membrane lipid bilayer. May participate in the regulation of osmotic pressure changes within the cell. This is Large-conductance mechanosensitive channel from Listeria monocytogenes serotype 4a (strain HCC23).